Reading from the N-terminus, the 92-residue chain is Small ribosomal subunit protein uS19 (92 aa).

Belongs to the universal ribosomal protein uS19 family.

Functionally, protein S19 forms a complex with S13 that binds strongly to the 16S ribosomal RNA. In Thermobifida fusca (strain YX), this protein is Small ribosomal subunit protein uS19.